We begin with the raw amino-acid sequence, 129 residues long: Glycine cleavage system H protein 2 (129 aa).

Residues 24–105 (SVTVGISDHA…PYVSWFFKLK (82 aa)) enclose the Lipoyl-binding domain. An N6-lipoyllysine modification is found at lysine 65.

Belongs to the GcvH family. In terms of assembly, the glycine cleavage system is composed of four proteins: P, T, L and H. The cofactor is (R)-lipoate.

Functionally, the glycine cleavage system catalyzes the degradation of glycine. The H protein shuttles the methylamine group of glycine from the P protein to the T protein. The protein is Glycine cleavage system H protein 2 of Pseudomonas aeruginosa (strain ATCC 15692 / DSM 22644 / CIP 104116 / JCM 14847 / LMG 12228 / 1C / PRS 101 / PAO1).